Reading from the N-terminus, the 306-residue chain is Homoserine O-acetyltransferase (306 aa).

The active-site Acyl-thioester intermediate is Cys142. Substrate is bound by residues Lys163 and Ser192. The Proton acceptor role is filled by His235. Glu237 is an active-site residue. Residue Arg249 coordinates substrate.

This sequence belongs to the MetA family.

The protein resides in the cytoplasm. The enzyme catalyses L-homoserine + acetyl-CoA = O-acetyl-L-homoserine + CoA. Its pathway is amino-acid biosynthesis; L-methionine biosynthesis via de novo pathway; O-acetyl-L-homoserine from L-homoserine: step 1/1. In terms of biological role, transfers an acetyl group from acetyl-CoA to L-homoserine, forming acetyl-L-homoserine. The protein is Homoserine O-acetyltransferase of Brucella abortus (strain S19).